A 175-amino-acid chain; its full sequence is Gamma-crystallin B (175 aa).

Beta/gamma crystallin 'Greek key' domains lie at 2 to 40 and 41 to 83; these read GKIT…RVDS and GCWM…RLIP. Lysine 3 carries an N-linked (Glc) (glycation) lysine; in vitro glycan. The cysteines at positions 19 and 23 are disulfide-linked. The interval 84–88 is connecting peptide; that stretch reads QHTGT. 2 Beta/gamma crystallin 'Greek key' domains span residues 89–129 and 130–172; these read FRMR…NVLE and GSWV…RRVM.

This sequence belongs to the beta/gamma-crystallin family.

Crystallins are the dominant structural components of the vertebrate eye lens. This is Gamma-crystallin B (CRYGB) from Bos taurus (Bovine).